A 111-amino-acid polypeptide reads, in one-letter code: MKHYEIVLMIHPDQSEQLDAMLSKYRGIIEEKGGKIHRFEDWGRRQLAYPIEKLHKAHYVLFNVECDVESLEKLQENLKYNDAVLRRLVISKKEAVTEPSIMMETNEKEVI.

This sequence belongs to the bacterial ribosomal protein bS6 family.

Its function is as follows. Binds together with bS18 to 16S ribosomal RNA. This is Small ribosomal subunit protein bS6 from Francisella philomiragia subsp. philomiragia (strain ATCC 25017 / CCUG 19701 / FSC 153 / O#319-036).